A 278-amino-acid chain; its full sequence is Transmembrane protein 45B (278 aa).

Transmembrane regions (helical) follow at residues 7–27 (HALP…KYPL), 49–69 (IIEG…EQFV), 95–115 (YLFF…FHIV), 117–137 (LGLD…LFYF), 149–169 (IHSL…LEVI), 183–203 (LLIL…PPFG), and 215–235 (IMFI…IVAI). A phosphoserine mark is found at Ser273 and Ser275.

This sequence belongs to the TMEM45 family.

It localises to the endosome membrane. Its subcellular location is the lysosome membrane. The protein resides in the golgi apparatus. It is found in the trans-Golgi network membrane. Its function is as follows. Plays a role in innate immunity. This chain is Transmembrane protein 45B (Tmem45b), found in Mus musculus (Mouse).